A 197-amino-acid polypeptide reads, in one-letter code: Guanylate kinase (197 aa).

The 180-residue stretch at 9–188 folds into the Guanylate kinase-like domain; it reads GRLVVFSAPS…AVEAVILAIS (180 aa). 16–23 is a binding site for ATP; that stretch reads APSGTGKS.

Belongs to the guanylate kinase family.

The protein localises to the cytoplasm. The enzyme catalyses GMP + ATP = GDP + ADP. In terms of biological role, essential for recycling GMP and indirectly, cGMP. In Chlorobium luteolum (strain DSM 273 / BCRC 81028 / 2530) (Pelodictyon luteolum), this protein is Guanylate kinase.